Consider the following 500-residue polypeptide: Lysine--tRNA ligase (500 aa).

The Mg(2+) site is built by glutamate 410 and glutamate 417.

This sequence belongs to the class-II aminoacyl-tRNA synthetase family. In terms of assembly, homodimer. Mg(2+) serves as cofactor.

The protein resides in the cytoplasm. The enzyme catalyses tRNA(Lys) + L-lysine + ATP = L-lysyl-tRNA(Lys) + AMP + diphosphate. The chain is Lysine--tRNA ligase from Mycoplasma mycoides subsp. mycoides SC (strain CCUG 32753 / NCTC 10114 / PG1).